A 366-amino-acid chain; its full sequence is Short-chain collagen C4 (366 aa).

Over residues 1–14 the composition is skewed to low complexity; the sequence is DTGPQGPQGVAGPP. 2 triple-helical region regions span residues 1-23 and 40-210; these read DTGP…KGDK and GPPG…NGAV. Positions 1–207 are disordered; the sequence is DTGPQGPQGV…QGPQGAPGSN (207 aa). Residues 28 to 45 show a composition bias toward pro residues; that stretch reads YPPPPTCPTCPAGPPGAP. 2 stretches are compositionally biased toward low complexity: residues 75–90 and 99–110; these read PGND…PGYD and TGAPGPQGPKGD. The segment covering 138-149 has biased composition (basic and acidic residues); it reads DGQDGAKGDKGD. 2 stretches are compositionally biased toward low complexity: residues 150-168 and 189-201; these read QGPA…QGPA and QGPK…QGPQ.

It is found in the secreted. It localises to the extracellular space. The protein resides in the extracellular matrix. The sequence is that of Short-chain collagen C4 from Ephydatia muelleri (Mueller's freshwater sponge).